Consider the following 161-residue polypeptide: Photosystem I reaction center subunit XI (161 aa).

Helical transmembrane passes span 84 to 104 (LIST…YGLV) and 126 to 146 (FTGG…FLLE).

This sequence belongs to the PsaL family.

It is found in the cellular thylakoid membrane. In Trichodesmium erythraeum (strain IMS101), this protein is Photosystem I reaction center subunit XI.